The primary structure comprises 432 residues: FLYWCH-type zinc finger-containing protein peb-1 (432 aa).

The segment at 1–33 (MLGLEKPLSSDISSSSTDTSAISPISVSSMPLS) is disordered. Positions 9-26 (SSDISSSSTDTSAISPIS) are enriched in low complexity. The required for DNA-binding DNA-binding region spans 30–188 (MPLSPDKEKK…RNKEGKPRKP (159 aa)). Residues 53-120 (IVTSFKGYQK…NACTKNTHNH (68 aa)) form an FLYWCH-type zinc finger. The disordered stretch occupies residues 174–195 (SLVSARNKEGKPRKPKSKTSTN).

It is found in the nucleus. In terms of biological role, putative transcription factor. Binds to specific sequence motif 5'-[TC][AGT]TGCC[GA][AT]-3' in regulatory elements of target genes such as myosin myo-2. May modulate gene expression, perhaps acting in opposition to transcription factor pha-4. Involved in morphogenesis, perhaps especially in formation of the pharynx. Plays roles in molting, feeding and morphology. The chain is FLYWCH-type zinc finger-containing protein peb-1 from Caenorhabditis briggsae.